The sequence spans 414 residues: Chaperone protein dnaJ 39 (414 aa).

Basic and acidic residues predominate over residues 1–24 (MATHSSRSENKDAGEEDELRRRNP). The segment at 1-36 (MATHSSRSENKDAGEEDELRRRNPYEVLGIPSNSTD) is disordered. Residues 23–88 (NPYEVLGIPS…ENRRLYDTTG (66 aa)) enclose the J domain. Residues 296–324 (EKESLRSTEAQIVSKRTELLKFEAEYHEV) are a coiled coil. Residues 362 to 395 (TKQGSSKSRSWSKKKSSLLMEPREEGEVAVREEG) form a disordered region. The segment covering 382–395 (EPREEGEVAVREEG) has biased composition (basic and acidic residues).

Belongs to the DnaJ family. C/III subfamily. Expressed constitutively at low levels in seedlings, roots, leaves, stems, flowers and siliques.

It is found in the membrane. Functionally, plays a continuous role in plant development probably in the structural organization of compartments. Seems to be involved in early gravitropic signal transduction within the gravity-perceiving cells (statocytes). The sequence is that of Chaperone protein dnaJ 39 (ATJ39) from Arabidopsis thaliana (Mouse-ear cress).